Here is a 432-residue protein sequence, read N- to C-terminus: MLPRSINILKLRPTTQVTTTALRALATEAKTTLGATPGSTSTSTSTSTATTTTLESTSTSTSGDATETTIKETKSIKRKRTFFTDELNKGPSFDDFVSGKAKDMLEDPLELARKDPNAKLPLWLKVPIPKGKSFHNVKNDVRELKLSTVCEEAKCPNIGECWGGKKSEATATIMLLGDTCTRGCRFCSVKTNRKPGKPDPMEPENTAEAISRWGLGYVVLTTVDRDDLIDGGANHLKETVQKIKFKAPQILVEVLGGDFRGDLEMVKILANSGLDVYAHNMETVEALTPHIRDRRATYRQSLAVLRTAKETKPSLITKTSLMLGFGETDDQIRQTLKDLREVGCDVVTFGQYMRPTKRHMKVVEYVTPEKFDYWRDVALEMGFLYVASGPLVRSSYKAGEAFIENVLKKRKHNVGESPRMLQEVKPSIFKRA.

Residues 32-68 are compositionally biased toward low complexity; the sequence is TLGATPGSTSTSTSTSTATTTTLESTSTSTSGDATET. The segment at 32–71 is disordered; it reads TLGATPGSTSTSTSTSTATTTTLESTSTSTSGDATETTIK. Cysteine 150, cysteine 155, cysteine 161, cysteine 180, cysteine 184, cysteine 187, and serine 395 together coordinate [4Fe-4S] cluster. Residues 165–384 enclose the Radical SAM core domain; it reads KKSEATATIM…RDVALEMGFL (220 aa).

It belongs to the radical SAM superfamily. Lipoyl synthase family. [4Fe-4S] cluster is required as a cofactor.

The protein localises to the mitochondrion. It carries out the reaction [[Fe-S] cluster scaffold protein carrying a second [4Fe-4S](2+) cluster] + N(6)-octanoyl-L-lysyl-[protein] + 2 oxidized [2Fe-2S]-[ferredoxin] + 2 S-adenosyl-L-methionine + 4 H(+) = [[Fe-S] cluster scaffold protein] + N(6)-[(R)-dihydrolipoyl]-L-lysyl-[protein] + 4 Fe(3+) + 2 hydrogen sulfide + 2 5'-deoxyadenosine + 2 L-methionine + 2 reduced [2Fe-2S]-[ferredoxin]. It functions in the pathway protein modification; protein lipoylation via endogenous pathway; protein N(6)-(lipoyl)lysine from octanoyl-[acyl-carrier-protein]: step 2/2. Functionally, catalyzes the radical-mediated insertion of two sulfur atoms into the C-6 and C-8 positions of the octanoyl moiety bound to the lipoyl domains of lipoate-dependent enzymes, thereby converting the octanoylated domains into lipoylated derivatives. In Lodderomyces elongisporus (strain ATCC 11503 / CBS 2605 / JCM 1781 / NBRC 1676 / NRRL YB-4239) (Yeast), this protein is Lipoyl synthase, mitochondrial.